The following is a 322-amino-acid chain: Corticotropin-releasing factor-binding protein (322 aa).

The N-terminal stretch at 1 to 24 is a signal peptide; that stretch reads MSPNFKLQCHFILILLTALRGESR. 5 disulfides stabilise this stretch: Cys-60–Cys-81, Cys-104–Cys-141, Cys-183–Cys-205, Cys-237–Cys-264, and Cys-277–Cys-318. The N-linked (GlcNAc...) asparagine glycan is linked to Asn-204.

The protein belongs to the CRF-binding protein family.

Its subcellular location is the secreted. In terms of biological role, binds CRF and inactivates it. May prevent inappropriate pituitary-adrenal stimulation in pregnancy. The protein is Corticotropin-releasing factor-binding protein (Crhbp) of Mus musculus (Mouse).